The primary structure comprises 487 residues: Probable cytosol aminopeptidase (487 aa).

Residues lysine 253 and aspartate 258 each contribute to the Mn(2+) site. Residue lysine 265 is part of the active site. Mn(2+) is bound by residues aspartate 277, aspartate 337, and glutamate 339. The active site involves arginine 341.

This sequence belongs to the peptidase M17 family. Requires Mn(2+) as cofactor.

The protein resides in the cytoplasm. The enzyme catalyses Release of an N-terminal amino acid, Xaa-|-Yaa-, in which Xaa is preferably Leu, but may be other amino acids including Pro although not Arg or Lys, and Yaa may be Pro. Amino acid amides and methyl esters are also readily hydrolyzed, but rates on arylamides are exceedingly low.. The catalysed reaction is Release of an N-terminal amino acid, preferentially leucine, but not glutamic or aspartic acids.. Presumably involved in the processing and regular turnover of intracellular proteins. Catalyzes the removal of unsubstituted N-terminal amino acids from various peptides. The protein is Probable cytosol aminopeptidase of Parasynechococcus marenigrum (strain WH8102).